The chain runs to 95 residues: UPF0358 protein BA_4159/GBAA_4159/BAS3861 (95 aa).

The protein belongs to the UPF0358 family.

The sequence is that of UPF0358 protein BA_4159/GBAA_4159/BAS3861 from Bacillus anthracis.